Consider the following 727-residue polypeptide: 5'-AMP-activated serine/threonine-protein kinase catalytic subunit alpha (727 aa).

A Protein kinase domain is found at 31–284 (YRLDKTLGIG…IHEIRNHPWF (254 aa)). Residues 37 to 45 (LGIGSFGKV) and Lys-60 each bind ATP. The Proton acceptor role is filled by Asp-154. Thr-188 carries the post-translational modification Phosphothreonine. The segment at 382-590 (FTTTTGFNPS…GSNNNSYEGG (209 aa)) is disordered. 2 stretches are compositionally biased toward low complexity: residues 391-483 (SNSN…SSIS) and 494-586 (NLNN…NNNS). The KA1 domain occupies 679 to 727 (RMVNGKPIKLVLQLFRVAENRYLLDIKKIEGEIFIFFDICSLMLEELNL).

It belongs to the protein kinase superfamily. CAMK Ser/Thr protein kinase family. SNF1 subfamily. Heterotrimer of an alpha catalytic subunit, a beta and a gamma non-catalytic subunits.

The enzyme catalyses L-seryl-[protein] + ATP = O-phospho-L-seryl-[protein] + ADP + H(+). It carries out the reaction L-threonyl-[protein] + ATP = O-phospho-L-threonyl-[protein] + ADP + H(+). Activated enzyme phosphorylates target proteins and initiates downstream signaling pathways that shift metabolism from anabolic to catabolic pathways. Acts as a highly sensitive cellular energy sensor. The sequence is that of 5'-AMP-activated serine/threonine-protein kinase catalytic subunit alpha (snfA) from Dictyostelium discoideum (Social amoeba).